We begin with the raw amino-acid sequence, 213 residues long: uncharacterized protein (213 aa).

This is an uncharacterized protein from Acidianus two-tailed virus (ATV).